We begin with the raw amino-acid sequence, 122 residues long: Large ribosomal subunit protein uL14 (122 aa).

The protein belongs to the universal ribosomal protein uL14 family. As to quaternary structure, part of the 50S ribosomal subunit. Forms a cluster with proteins L3 and L19. In the 70S ribosome, L14 and L19 interact and together make contacts with the 16S rRNA in bridges B5 and B8.

In terms of biological role, binds to 23S rRNA. Forms part of two intersubunit bridges in the 70S ribosome. This chain is Large ribosomal subunit protein uL14, found in Renibacterium salmoninarum (strain ATCC 33209 / DSM 20767 / JCM 11484 / NBRC 15589 / NCIMB 2235).